A 152-amino-acid polypeptide reads, in one-letter code: Deoxyuridine 5'-triphosphate nucleotidohydrolase (152 aa).

Residues 71 to 73 (RSG), N84, 88 to 90 (LID), and M98 contribute to the substrate site.

It belongs to the dUTPase family. The cofactor is Mg(2+).

It carries out the reaction dUTP + H2O = dUMP + diphosphate + H(+). It participates in pyrimidine metabolism; dUMP biosynthesis; dUMP from dCTP (dUTP route): step 2/2. Its function is as follows. This enzyme is involved in nucleotide metabolism: it produces dUMP, the immediate precursor of thymidine nucleotides and it decreases the intracellular concentration of dUTP so that uracil cannot be incorporated into DNA. The polypeptide is Deoxyuridine 5'-triphosphate nucleotidohydrolase (Shewanella baltica (strain OS155 / ATCC BAA-1091)).